Consider the following 421-residue polypeptide: Esterase LipQ (421 aa).

Catalysis depends on residues Ser249, Asp344, and His377.

Belongs to the 'GDXG' lipolytic enzyme family.

It catalyses the reaction hexadecanoate ester + H2O = an aliphatic alcohol + hexadecanoate + H(+). In terms of biological role, shows lipase activity. Is highly immunogenic and may play an important role in the virulence and pathogenesis of M.tuberculosis infection, by altering the balance of cytokines. Significantly down-regulates the expression level of pro-inflammatory cytokines (TNF-alpha and IFN-gamma) and up-regulates the level of anti-inflammatory cytokines such as IL-4 and IL-10 as compared to LPS stimulated macrophages. Also inhibits the expression of iNOS, TLR2 and transcription factor NF-kappa-B in LPS stimulated macrophages whereas the expression of TLR-4 remains unchanged. This Mycobacterium tuberculosis (strain ATCC 25618 / H37Rv) protein is Esterase LipQ.